Consider the following 285-residue polypeptide: Malectin (285 aa).

The signal sequence occupies residues 1-26 (MRRVTLHCAARLVIAALWLLVEVCRA). Over 27 to 262 (ESGAQSLAER…TPNPYATDNS (236 aa)) the chain is Lumenal. Residues Tyr71, Tyr93, Tyr120, Phe121, and Asp190 each contribute to the a carbohydrate site. Residues 209–258 (KLQPHPGLEKREEEEEEEEEGEGPEGEKKSASTSPKNPVRSGPRTPNPYA) are disordered. Residues 220–232 (EEEEEEEEEGEGP) are compositionally biased toward acidic residues. The N-linked (GlcNAc...) asparagine glycan is linked to Asn261. The chain crosses the membrane as a helical span at residues 263–283 (SLMFPILVAFGVFIPTLFCLC). Over 284-285 (RL) the chain is Cytoplasmic.

It belongs to the malectin family.

Its subcellular location is the endoplasmic reticulum membrane. Its function is as follows. Carbohydrate-binding protein with a strong ligand preference for Glc2-N-glycan. May play a role in the early steps of protein N-glycosylation. This Danio rerio (Zebrafish) protein is Malectin.